The following is a 194-amino-acid chain: Protein GrpE (194 aa).

A disordered region spans residues 1–40 (MSRKHHKEQEEIQEQETISAGAAETPAEETAAIPAATEAD). The span at 20 to 38 (AGAAETPAEETAAIPAATE) shows a compositional bias: low complexity.

Belongs to the GrpE family. As to quaternary structure, homodimer.

It localises to the cytoplasm. In terms of biological role, participates actively in the response to hyperosmotic and heat shock by preventing the aggregation of stress-denatured proteins, in association with DnaK and GrpE. It is the nucleotide exchange factor for DnaK and may function as a thermosensor. Unfolded proteins bind initially to DnaJ; upon interaction with the DnaJ-bound protein, DnaK hydrolyzes its bound ATP, resulting in the formation of a stable complex. GrpE releases ADP from DnaK; ATP binding to DnaK triggers the release of the substrate protein, thus completing the reaction cycle. Several rounds of ATP-dependent interactions between DnaJ, DnaK and GrpE are required for fully efficient folding. The protein is Protein GrpE of Chlorobaculum tepidum (strain ATCC 49652 / DSM 12025 / NBRC 103806 / TLS) (Chlorobium tepidum).